The primary structure comprises 119 residues: Large ribosomal subunit protein bL20 (119 aa).

This sequence belongs to the bacterial ribosomal protein bL20 family.

In terms of biological role, binds directly to 23S ribosomal RNA and is necessary for the in vitro assembly process of the 50S ribosomal subunit. It is not involved in the protein synthesizing functions of that subunit. The chain is Large ribosomal subunit protein bL20 from Legionella pneumophila (strain Paris).